A 421-amino-acid chain; its full sequence is Cytochrome c biogenesis protein Ccs1 (421 aa).

3 helical membrane passes run 12 to 32, 71 to 91, and 157 to 177; these read LRFAISILLIIASCSVIGTVI, TWWFLGFIALFGLSLFTCTIL, and IAPIIVHFSMILILIGAIFGA.

Belongs to the Ccs1/CcsB family. May interact with CcsA.

The protein localises to the plastid. It is found in the chloroplast thylakoid membrane. Its function is as follows. Required during biogenesis of c-type cytochromes (cytochrome c6 and cytochrome f) at the step of heme attachment. The sequence is that of Cytochrome c biogenesis protein Ccs1 from Trieres chinensis (Marine centric diatom).